The primary structure comprises 497 residues: Aspartyl/glutamyl-tRNA(Asn/Gln) amidotransferase subunit B (497 aa).

It belongs to the GatB/GatE family. GatB subfamily. In terms of assembly, heterotrimer of A, B and C subunits.

It carries out the reaction L-glutamyl-tRNA(Gln) + L-glutamine + ATP + H2O = L-glutaminyl-tRNA(Gln) + L-glutamate + ADP + phosphate + H(+). The catalysed reaction is L-aspartyl-tRNA(Asn) + L-glutamine + ATP + H2O = L-asparaginyl-tRNA(Asn) + L-glutamate + ADP + phosphate + 2 H(+). Functionally, allows the formation of correctly charged Asn-tRNA(Asn) or Gln-tRNA(Gln) through the transamidation of misacylated Asp-tRNA(Asn) or Glu-tRNA(Gln) in organisms which lack either or both of asparaginyl-tRNA or glutaminyl-tRNA synthetases. The reaction takes place in the presence of glutamine and ATP through an activated phospho-Asp-tRNA(Asn) or phospho-Glu-tRNA(Gln). This chain is Aspartyl/glutamyl-tRNA(Asn/Gln) amidotransferase subunit B, found in Novosphingobium aromaticivorans (strain ATCC 700278 / DSM 12444 / CCUG 56034 / CIP 105152 / NBRC 16084 / F199).